We begin with the raw amino-acid sequence, 154 residues long: Lipoprotein signal peptidase (154 aa).

The next 2 helical transmembrane spans lie at 55-75 (GQFWLFYLITVIVVAAIVIYI) and 85-105 (AGVGLGLMLGGAIGNFLDRVF). Active-site residues include Asp-111 and Asp-129. Residues 127–147 (VADSALTVGVILLFVHMFFFA) traverse the membrane as a helical segment.

This sequence belongs to the peptidase A8 family.

It is found in the cell membrane. It carries out the reaction Release of signal peptides from bacterial membrane prolipoproteins. Hydrolyzes -Xaa-Yaa-Zaa-|-(S,diacylglyceryl)Cys-, in which Xaa is hydrophobic (preferably Leu), and Yaa (Ala or Ser) and Zaa (Gly or Ala) have small, neutral side chains.. The protein operates within protein modification; lipoprotein biosynthesis (signal peptide cleavage). In terms of biological role, this protein specifically catalyzes the removal of signal peptides from prolipoproteins. The sequence is that of Lipoprotein signal peptidase from Geobacillus kaustophilus (strain HTA426).